Here is a 240-residue protein sequence, read N- to C-terminus: Splicing factor U2AF 35 kDa subunit (240 aa).

The residue at position 2 (Ala2) is an N-acetylalanine. The C3H1-type 1 zinc finger occupies 12-40 (EKDKVNCSFYFKIGACRHGDRCSRLHNKP). The residue at position 39 (Lys39) is an N6-methyllysine. Ser61 and Ser145 each carry phosphoserine. The 83-residue stretch at 65–147 (LRCAVSDVEM…QPIHAELSPV (83 aa)) folds into the RRM domain. A C3H1-type 2 zinc finger spans residues 149-176 (DFREACCRQYEMGECTRGGFCNFMHLKP). Residue Arg165 is modified to Omega-N-methylarginine. Residues 183–240 (RELYGRRRKKHRSRSRSRERRSRSRDRGRGGGGGGGGGGGGRERDRRRSRDRERSGRF) form a disordered region. The segment covering 188–208 (RRRKKHRSRSRSRERRSRSRD) has biased composition (basic residues). Gly residues predominate over residues 212-222 (GGGGGGGGGGG). Over residues 223-240 (GRERDRRRSRDRERSGRF) the composition is skewed to basic and acidic residues.

It belongs to the splicing factor SR family. In terms of assembly, identified in the spliceosome C complex. Heterodimer with U2AF2. Interacts (via RS domain) with PHF5A (via N-terminus). Interacts with ZRANB2. Interacts with SDE2. Interacts with SF3B1.

Its subcellular location is the nucleus. The protein resides in the nucleus speckle. Plays a critical role in both constitutive and enhancer-dependent splicing by mediating protein-protein interactions and protein-RNA interactions required for accurate 3'-splice site selection. Recruits U2 snRNP to the branch point. Directly mediates interactions between U2AF2 and proteins bound to the enhancers and thus may function as a bridge between U2AF2 and the enhancer complex to recruit it to the adjacent intron. The protein is Splicing factor U2AF 35 kDa subunit (U2AF1) of Homo sapiens (Human).